The primary structure comprises 177 residues: Large ribosomal subunit protein uL6 (177 aa).

It belongs to the universal ribosomal protein uL6 family. In terms of assembly, part of the 50S ribosomal subunit.

Functionally, this protein binds to the 23S rRNA, and is important in its secondary structure. It is located near the subunit interface in the base of the L7/L12 stalk, and near the tRNA binding site of the peptidyltransferase center. The sequence is that of Large ribosomal subunit protein uL6 from Acinetobacter baylyi (strain ATCC 33305 / BD413 / ADP1).